The sequence spans 332 residues: UPF0158 protein TC_0713 (332 aa).

2 disordered regions span residues 196–215 (ALNP…KVEA) and 291–332 (LGYD…KARS). Acidic residues predominate over residues 295–316 (GDGDASDFFGEEYDDDDDDDDD). Over residues 320 to 332 (KKAAKRGRKKARS) the composition is skewed to basic residues.

Belongs to the UPF0158 family.

The chain is UPF0158 protein TC_0713 from Chlamydia muridarum (strain MoPn / Nigg).